Here is a 146-residue protein sequence, read N- to C-terminus: Linear conopeptide (146 aa).

Residues 1 to 19 (MLRLIIAAAVLVSACLAYP) form the signal peptide. Positions 20 to 34 (QRREGAPADAANLQS) are excised as a propeptide. The residue at position 40 (Met-40) is a Methionine sulfoxide; partial; in Cn2. 2 consecutive propeptides follow at residues 58–80 (FLPF…LEKR) and 104–146 (FLHN…DKEQ). The disordered stretch occupies residues 107-146 (NEKGDKHPFANVDSADTDLGQFEPSAENKNGEFRFFDKEQ). Basic and acidic residues predominate over residues 135–146 (KNGEFRFFDKEQ).

In terms of tissue distribution, expressed by the venom duct.

Its subcellular location is the secreted. This chain is Linear conopeptide, found in Conus consors (Singed cone).